The primary structure comprises 292 residues: D-galactarolactone isomerase (292 aa).

This sequence belongs to the metallo-dependent hydrolases superfamily. Does not require a metal cofactor. is required as a cofactor.

It catalyses the reaction D-galactaro-1,5-lactone = D-galactaro-1,4-lactone. The protein operates within carbohydrate acid metabolism; D-galacturonate degradation via prokaryotic oxidative pathway. In terms of biological role, catalyzes the isomerization of D-galactaro-1,5-lactone to D-galactaro-1,4-lactone. This is a step in the oxidative degradation pathway of D-galacturonate, which allows A.tumefaciens to utilize D-galacturonate as a sole carbon source. The sequence is that of D-galactarolactone isomerase from Agrobacterium fabrum (strain C58 / ATCC 33970) (Agrobacterium tumefaciens (strain C58)).